Consider the following 567-residue polypeptide: Adenine deaminase (567 aa).

This sequence belongs to the metallo-dependent hydrolases superfamily. Adenine deaminase family. Mn(2+) is required as a cofactor.

It catalyses the reaction adenine + H2O + H(+) = hypoxanthine + NH4(+). The polypeptide is Adenine deaminase (Methanothrix thermoacetophila (strain DSM 6194 / JCM 14653 / NBRC 101360 / PT) (Methanosaeta thermophila)).